We begin with the raw amino-acid sequence, 718 residues long: Acetolactate synthase, mitochondrial (718 aa).

2 disordered regions span residues 1–53 (MLTR…YDTP) and 75–99 (QSSA…QAAP). The segment covering 32–45 (RYSNNIHTSSTQNA) has biased composition (polar residues). A compositionally biased stretch (low complexity) spans 76 to 99 (SSASTAAASPAVRPQPAQHFQAAP). E173 serves as a coordination point for thiamine diphosphate. Residue R275 participates in FAD binding. The tract at residues 301–326 (VQPGHSPYLPSNPLNPSSQPSDPLPG) is disordered. Residues 306 to 325 (SPYLPSNPLNPSSQPSDPLP) show a composition bias toward low complexity. Residues 397 to 418 (HGSA…LGVR) and 449 to 468 (EIQP…VLGD) contribute to the FAD site. The tract at residues 541 to 621 (QHQMWACQYY…VKVLLFNNEF (81 aa)) is thiamine pyrophosphate binding. D592 and N619 together coordinate Mg(2+).

The protein belongs to the TPP enzyme family. It depends on Mg(2+) as a cofactor. The cofactor is thiamine diphosphate.

The protein resides in the mitochondrion. It carries out the reaction 2 pyruvate + H(+) = (2S)-2-acetolactate + CO2. It functions in the pathway amino-acid biosynthesis; L-isoleucine biosynthesis; L-isoleucine from 2-oxobutanoate: step 1/4. The protein operates within amino-acid biosynthesis; L-valine biosynthesis; L-valine from pyruvate: step 1/4. The chain is Acetolactate synthase, mitochondrial (ILV2) from Cryptococcus neoformans var. grubii serotype A (strain H99 / ATCC 208821 / CBS 10515 / FGSC 9487) (Filobasidiella neoformans var. grubii).